The sequence spans 70 residues: DNA-directed RNA polymerase subunit omega (70 aa).

The protein belongs to the RNA polymerase subunit omega family. The RNAP catalytic core consists of 2 alpha, 1 beta, 1 beta' and 1 omega subunit. When a sigma factor is associated with the core the holoenzyme is formed, which can initiate transcription.

It catalyses the reaction RNA(n) + a ribonucleoside 5'-triphosphate = RNA(n+1) + diphosphate. In terms of biological role, promotes RNA polymerase assembly. Latches the N- and C-terminal regions of the beta' subunit thereby facilitating its interaction with the beta and alpha subunits. This chain is DNA-directed RNA polymerase subunit omega, found in Staphylococcus saprophyticus subsp. saprophyticus (strain ATCC 15305 / DSM 20229 / NCIMB 8711 / NCTC 7292 / S-41).